Consider the following 1284-residue polypeptide: Collagen alpha-1(XX) chain (1284 aa).

An N-terminal signal peptide occupies residues 1–22 (MSSGDPAHLGLCLWLWLGATLG). Residues 28 to 119 (ASGLLRLAVL…EFVIEDLKSS (92 aa)) enclose the Fibronectin type-III 1 domain. Residues 122 to 171 (DRSSQRPLGSGAPEPTPSHTGSPDPEQASEPQVAFTPSQDPRTPAGPQFR) form a disordered region. The 176-residue stretch at 179 to 354 (DMVFLVDGSW…GALAGLLSRL (176 aa)) folds into the VWFA domain. Fibronectin type-III domains follow at residues 379 to 468 (APTS…APLP), 469 to 559 (PPRA…TLAP), 560 to 647 (PRHL…TKKA), 649 to 738 (SPSQ…TPST), and 743 to 833 (PPSN…ACPA). Asparagine 607 is a glycosylation site (N-linked (GlcNAc...) asparagine). One can recognise a Laminin G-like domain in the interval 842–1037 (GFDLMVAFSL…LQMLQIVCSD (196 aa)). 2 disordered regions span residues 1065-1190 (SCSS…EKGE) and 1212-1284 (SFHE…GLWE). Residues 1071–1082 (PGPPGPQGPPGL) show a composition bias toward pro residues. 2 consecutive Collagen-like domains span residues 1071–1127 (PGPP…IPGR) and 1133–1190 (PKGM…EKGE). Composition is skewed to low complexity over residues 1112-1125 (LPGLQGHPGHQGIP) and 1166-1181 (ERGPPGTVGPTGLPGP). Positions 1271–1284 (SPGQQGASTQGLWE) are enriched in polar residues.

High expression in heart, lung, liver, skeletal muscle, kidney, pancreas, spleen, testis, ovary, subthalamic nucleus and fetal liver. Weak expression in other tissues tested.

It is found in the secreted. It localises to the extracellular space. Probable collagen protein. This is Collagen alpha-1(XX) chain (COL20A1) from Homo sapiens (Human).